The sequence spans 470 residues: Neuraminidase (470 aa).

The Intravirion segment spans residues 1–6; the sequence is MNPNQK. A helical membrane pass occupies residues 7–29; it reads IITIGSVSIVLTTVGLLLQITSL. Residues 11 to 33 form an involved in apical transport and lipid raft association region; it reads GSVSIVLTTVGLLLQITSLCSIW. At 30 to 470 the chain is on the virion surface side; the sequence is CSIWFSHYNQ…GALLPFDIDK (441 aa). Positions 36-88 are hypervariable stalk region; it reads HYNQVTQTNGQPCSNDTINYYNETFVNVTNVQNNYTTITEPSIPQAIHYSSGR. N-linked (GlcNAc...) asparagine; by host glycosylation is found at asparagine 50, asparagine 57, asparagine 62, and asparagine 69. The segment at 90 to 470 is head of neuraminidase; that stretch reads LCPVKGWAPL…GALLPFDIDK (381 aa). 8 disulfides stabilise this stretch: cysteine 91–cysteine 418, cysteine 123–cysteine 128, cysteine 183–cysteine 230, cysteine 232–cysteine 237, cysteine 278–cysteine 291, cysteine 280–cysteine 289, cysteine 317–cysteine 334, and cysteine 422–cysteine 447. Position 117 (arginine 117) interacts with substrate. Asparagine 145 carries an N-linked (GlcNAc...) asparagine; by host glycan. Catalysis depends on aspartate 150, which acts as the Proton donor/acceptor. Arginine 151 provides a ligand contact to substrate. Residue 276–277 participates in substrate binding; that stretch reads EE. Arginine 292 contacts substrate. Ca(2+) is bound by residues aspartate 293, glycine 297, and aspartate 323. Arginine 369 contributes to the substrate binding site. An N-linked (GlcNAc...) asparagine; by host glycan is attached at asparagine 399. The Nucleophile role is filled by tyrosine 403. N-linked (GlcNAc...) asparagine; by host glycosylation is present at asparagine 417.

Belongs to the glycosyl hydrolase 34 family. As to quaternary structure, homotetramer. Requires Ca(2+) as cofactor. N-glycosylated.

The protein localises to the virion membrane. Its subcellular location is the host apical cell membrane. The enzyme catalyses Hydrolysis of alpha-(2-&gt;3)-, alpha-(2-&gt;6)-, alpha-(2-&gt;8)- glycosidic linkages of terminal sialic acid residues in oligosaccharides, glycoproteins, glycolipids, colominic acid and synthetic substrates.. With respect to regulation, inhibited by the neuraminidase inhibitors zanamivir (Relenza) and oseltamivir (Tamiflu). These drugs interfere with the release of progeny virus from infected cells and are effective against all influenza strains. Resistance to neuraminidase inhibitors is quite rare. Its function is as follows. Catalyzes the removal of terminal sialic acid residues from viral and cellular glycoconjugates. Cleaves off the terminal sialic acids on the glycosylated HA during virus budding to facilitate virus release. Additionally helps virus spread through the circulation by further removing sialic acids from the cell surface. These cleavages prevent self-aggregation and ensure the efficient spread of the progeny virus from cell to cell. Otherwise, infection would be limited to one round of replication. Described as a receptor-destroying enzyme because it cleaves a terminal sialic acid from the cellular receptors. May facilitate viral invasion of the upper airways by cleaving the sialic acid moieties on the mucin of the airway epithelial cells. Likely to plays a role in the budding process through its association with lipid rafts during intracellular transport. May additionally display a raft-association independent effect on budding. Plays a role in the determination of host range restriction on replication and virulence. Sialidase activity in late endosome/lysosome traffic seems to enhance virus replication. This chain is Neuraminidase, found in Aves.